A 460-amino-acid chain; its full sequence is U-box domain-containing protein 9 (460 aa).

The U-box domain occupies 73-147 (SCPEEFRCPL…SKWCKKNGLE (75 aa)). 3 ARM repeats span residues 201–244 (TEFR…NISI), 248–287 (SNKK…TLSA), and 289–328 (DSNK…TLCI).

In terms of assembly, binds to SD11, SD16, SD17, SD18, SD113, SD129 and SD25. In terms of processing, phosphorylated by SD1-6 and SD1-7.

The protein resides in the nucleus. It is found in the cell membrane. The enzyme catalyses S-ubiquitinyl-[E2 ubiquitin-conjugating enzyme]-L-cysteine + [acceptor protein]-L-lysine = [E2 ubiquitin-conjugating enzyme]-L-cysteine + N(6)-ubiquitinyl-[acceptor protein]-L-lysine.. Its pathway is protein modification; protein ubiquitination. Functions as an E3 ubiquitin ligase. May be involved in the abscisic acid-mediated signaling pathway, at least during germination. This chain is U-box domain-containing protein 9 (PUB9), found in Arabidopsis thaliana (Mouse-ear cress).